We begin with the raw amino-acid sequence, 1285 residues long: Period circadian protein homolog 1 (1285 aa).

Residues 1 to 134 (MSGPLEGADG…SSEQSARART (134 aa)) form a disordered region. Residues 1-151 (MSGPLEGADG…LRELKLRLPP (151 aa)) are interaction with BTRC. Composition is skewed to low complexity over residues 48-57 (NSNGSSGNES) and 64-115 (GASQ…ASSE). Positions 116–132 (QDNPSTSGCSSEQSARA) are enriched in polar residues. A Phosphothreonine; by CSNK1E modification is found at T121. Phosphoserine; by CSNK1E is present on residues S122 and S126. The Nuclear export signal 1 motif lies at 138 to 147 (LMTALRELKL). 2 consecutive PAS domains span residues 208–275 (ITSE…PFRL) and 348–414 (YEAP…KILQ). A PAC domain is found at 422–465 (HSPIRFCARNGEYVTMDTSWAGFVHPWSRKVAFVLGRHKVRTAP). The Nuclear export signal 2 motif lies at 489–498 (LSEQIHRLLL). Disordered stretches follow at residues 503–544 (SSSP…PAPV) and 643–694 (TKRK…KEPV). Composition is skewed to low complexity over residues 523 to 533 (SPGSSSDSNGG) and 648 to 658 (ASSSSCTASSA). Residues 592–811 (ELEVVPMPNQ…GLDSSSATPS (220 aa)) are required for phosphorylation by CSNK1E. Phosphoserine occurs at positions 657, 659, 700, and 811. 2 disordered regions span residues 802–867 (GLDS…PPST) and 931–1030 (LSQA…DALS). The Nuclear localization signal signature appears at 820–836 (VPPGRRHHCRSKAKRSR). Residues 823–840 (GRRHHCRSKAKRSRHHHT) show a composition bias toward basic residues. The segment covering 853-867 (SPVPPSGPWPPPPST) has biased composition (pro residues). The span at 943–954 (ASHSPSPSLTPL) shows a compositional bias: low complexity. The segment covering 967–979 (FNSRCSSPLQLNL) has biased composition (polar residues). 2 positions are modified to phosphoserine: S972 and S973. Positions 975 to 982 (LQLNLLQL) match the Nuclear export signal 3 motif. The short motif at 1036 to 1040 (LELLL) is the LXXLL element. Residues 1045 to 1055 (RSGTGSAASGS) are compositionally biased toward low complexity. Disordered stretches follow at residues 1045-1091 (RSGT…SKYF) and 1202-1285 (IQDP…NSTS). The segment covering 1056–1070 (LGSGLGSGSGSGSHE) has biased composition (gly residues). Residues 1071–1088 (GGSTSASITRSSQSSHTS) show a composition bias toward low complexity. The segment at 1142-1285 (SRDRASVLKQ…ALPAEENSTS (144 aa)) is CRY binding domain. Residues 1229–1241 (GEGGGGGGGGGEG) are compositionally biased toward gly residues. The span at 1269-1285 (GGSSSSPALPAEENSTS) shows a compositional bias: polar residues.

As to quaternary structure, homodimer. Component of the circadian core oscillator, which includes the CRY proteins, CLOCK or NPAS2, BMAL1 or BMAL2, CSNK1D and/or CSNK1E, TIMELESS, and the PER proteins. Interacts directly with TIMELESS, PER2, PER3, CRY1 and CRY2. Interacts with BMAL1 and CLOCK. Interacts with GPRASP1. Interacts (phosphorylated) with BTRC and FBXW11; the interactions trigger proteasomal degradation. Interacts with NONO, WDR5 and SFPQ. Interacts with USP2. Interacts with HNF4A. Phosphorylated on serine residues by CSNK1D, CSNK1E and probably also by CSNK1G2. Phosphorylation by CSNK1D or CSNK1E promotes nuclear location of PER proteins as well as ubiquitination and subsequent degradation. May be dephosphorylated by PP1. In terms of processing, ubiquitinated; requires phosphorylation by CSNK1E and interaction with BTRC and FBXW11. Deubiquitinated by USP2. Expressed in the brain, mainly in the suprachiasmatic nucleus (SCN). Expression also found in the harderian gland, lung, eye, intestine, liver and skeletal muscle.

The protein resides in the nucleus. Its subcellular location is the cytoplasm. In terms of biological role, transcriptional repressor which forms a core component of the circadian clock. The circadian clock, an internal time-keeping system, regulates various physiological processes through the generation of approximately 24 hour circadian rhythms in gene expression, which are translated into rhythms in metabolism and behavior. It is derived from the Latin roots 'circa' (about) and 'diem' (day) and acts as an important regulator of a wide array of physiological functions including metabolism, sleep, body temperature, blood pressure, endocrine, immune, cardiovascular, and renal function. Consists of two major components: the central clock, residing in the suprachiasmatic nucleus (SCN) of the brain, and the peripheral clocks that are present in nearly every tissue and organ system. Both the central and peripheral clocks can be reset by environmental cues, also known as Zeitgebers (German for 'timegivers'). The predominant Zeitgeber for the central clock is light, which is sensed by retina and signals directly to the SCN. The central clock entrains the peripheral clocks through neuronal and hormonal signals, body temperature and feeding-related cues, aligning all clocks with the external light/dark cycle. Circadian rhythms allow an organism to achieve temporal homeostasis with its environment at the molecular level by regulating gene expression to create a peak of protein expression once every 24 hours to control when a particular physiological process is most active with respect to the solar day. Transcription and translation of core clock components (CLOCK, NPAS2, BMAL1, BMAL2, PER1, PER2, PER3, CRY1 and CRY2) plays a critical role in rhythm generation, whereas delays imposed by post-translational modifications (PTMs) are important for determining the period (tau) of the rhythms (tau refers to the period of a rhythm and is the length, in time, of one complete cycle). A diurnal rhythm is synchronized with the day/night cycle, while the ultradian and infradian rhythms have a period shorter and longer than 24 hours, respectively. Disruptions in the circadian rhythms contribute to the pathology of cardiovascular diseases, cancer, metabolic syndromes and aging. A transcription/translation feedback loop (TTFL) forms the core of the molecular circadian clock mechanism. Transcription factors, CLOCK or NPAS2 and BMAL1 or BMAL2, form the positive limb of the feedback loop, act in the form of a heterodimer and activate the transcription of core clock genes and clock-controlled genes (involved in key metabolic processes), harboring E-box elements (5'-CACGTG-3') within their promoters. The core clock genes: PER1/2/3 and CRY1/2 which are transcriptional repressors form the negative limb of the feedback loop and interact with the CLOCK|NPAS2-BMAL1|BMAL2 heterodimer inhibiting its activity and thereby negatively regulating their own expression. This heterodimer also activates nuclear receptors NR1D1/2 and RORA/B/G, which form a second feedback loop and which activate and repress BMAL1 transcription, respectively. Regulates circadian target genes expression at post-transcriptional levels, but may not be required for the repression at transcriptional level. Controls PER2 protein decay. Represses CRY2 preventing its repression on CLOCK/BMAL1 target genes such as FXYD5 and SCNN1A in kidney and PPARA in liver. Besides its involvement in the maintenance of the circadian clock, has an important function in the regulation of several processes. Participates in the repression of glucocorticoid receptor NR3C1/GR-induced transcriptional activity by reducing the association of NR3C1/GR to glucocorticoid response elements (GREs) by BMAL1:CLOCK. Plays a role in the modulation of the neuroinflammatory state via the regulation of inflammatory mediators release, such as CCL2 and IL6. In spinal astrocytes, negatively regulates the MAPK14/p38 and MAPK8/JNK MAPK cascades as well as the subsequent activation of NFkappaB. Coordinately regulates the expression of multiple genes that are involved in the regulation of renal sodium reabsorption. Can act as gene expression activator in a gene and tissue specific manner, in kidney enhances WNK1 and SLC12A3 expression in collaboration with CLOCK. Modulates hair follicle cycling. Represses the CLOCK-BMAL1 induced transcription of BHLHE40/DEC1. The protein is Period circadian protein homolog 1 (PER1) of Spalax judaei (Judean Mountains blind mole rat).